A 585-amino-acid chain; its full sequence is Zinc finger protein 732 (585 aa).

One can recognise a KRAB domain in the interval 4–75 (LTFRDVAIEF…KIHETVAKHP (72 aa)). The segment at 141-163 (FQCNVHVKVFSTFSNSNQRRIRH) adopts a C2H2-type 1; degenerate zinc-finger fold. The C2H2-type 2; degenerate zinc finger occupies 167–189 (KHFKECGKSFQKFSDLTQHQGIH). The C2H2-type 3; degenerate zinc finger occupies 195 to 217 (YTCEECGKDFKWYLIFNEYEIIH). Residues 223–244 (FTCEECGNIFTTSSNFAKHKVH) form a C2H2-type 4 zinc finger. The C2H2-type 5; degenerate zinc finger occupies 250-272 (YKYEECGKAFNRSSTLTKHKRIH). 9 consecutive C2H2-type zinc fingers follow at residues 278–300 (FTCE…KKIH), 306–328 (YKCQ…NRIH), 334–356 (YTCE…KRIH), 362–384 (YKCE…KSIH), 390–412 (YTCE…KRIH), 418–440 (HKCE…KIIH), 446–468 (YKCE…KKIH), 474–496 (YRCE…KTIH), and 502–524 (YECE…KKIH). The C2H2-type 15; degenerate zinc finger occupies 530–552 (YRCEECGKAFRRSRVLNKYKTIH). The C2H2-type 16; degenerate zinc-finger motif lies at 558–580 (PKCKGCGKAFKWSSYLNQHNKIY).

Belongs to the krueppel C2H2-type zinc-finger protein family.

Its subcellular location is the nucleus. In terms of biological role, may be involved in transcriptional regulation. This is Zinc finger protein 732 (ZNF732) from Homo sapiens (Human).